Reading from the N-terminus, the 602-residue chain is Elongation factor 4 (602 aa).

In terms of domain architecture, tr-type G spans 6–188 (RNVRNFSIIA…RITEVVPEPA (183 aa)). Residues 18–23 (DHGKST) and 135–138 (NKID) contribute to the GTP site.

The protein belongs to the TRAFAC class translation factor GTPase superfamily. Classic translation factor GTPase family. LepA subfamily.

Its subcellular location is the cell membrane. It carries out the reaction GTP + H2O = GDP + phosphate + H(+). Its function is as follows. Required for accurate and efficient protein synthesis under certain stress conditions. May act as a fidelity factor of the translation reaction, by catalyzing a one-codon backward translocation of tRNAs on improperly translocated ribosomes. Back-translocation proceeds from a post-translocation (POST) complex to a pre-translocation (PRE) complex, thus giving elongation factor G a second chance to translocate the tRNAs correctly. Binds to ribosomes in a GTP-dependent manner. In Oceanobacillus iheyensis (strain DSM 14371 / CIP 107618 / JCM 11309 / KCTC 3954 / HTE831), this protein is Elongation factor 4.